Here is a 463-residue protein sequence, read N- to C-terminus: Cysteine--tRNA ligase (463 aa).

Zn(2+) is bound at residue Cys27. Positions 29–39 match the 'HIGH' region motif; sequence PTVYGLIHIGN. Zn(2+) contacts are provided by Cys207, His232, and Glu236. Residues 264 to 268 carry the 'KMSKS' region motif; that stretch reads KMSKS. Lys267 lines the ATP pocket.

This sequence belongs to the class-I aminoacyl-tRNA synthetase family. As to quaternary structure, monomer. The cofactor is Zn(2+).

It is found in the cytoplasm. The enzyme catalyses tRNA(Cys) + L-cysteine + ATP = L-cysteinyl-tRNA(Cys) + AMP + diphosphate. This Pseudothermotoga lettingae (strain ATCC BAA-301 / DSM 14385 / NBRC 107922 / TMO) (Thermotoga lettingae) protein is Cysteine--tRNA ligase.